We begin with the raw amino-acid sequence, 482 residues long: Glutamyl-tRNA(Gln) amidotransferase subunit A (482 aa).

Active-site charge relay system residues include lysine 81 and serine 156. Catalysis depends on serine 180, which acts as the Acyl-ester intermediate.

It belongs to the amidase family. GatA subfamily. In terms of assembly, heterotrimer of A, B and C subunits.

The catalysed reaction is L-glutamyl-tRNA(Gln) + L-glutamine + ATP + H2O = L-glutaminyl-tRNA(Gln) + L-glutamate + ADP + phosphate + H(+). In terms of biological role, allows the formation of correctly charged Gln-tRNA(Gln) through the transamidation of misacylated Glu-tRNA(Gln) in organisms which lack glutaminyl-tRNA synthetase. The reaction takes place in the presence of glutamine and ATP through an activated gamma-phospho-Glu-tRNA(Gln). The protein is Glutamyl-tRNA(Gln) amidotransferase subunit A of Brachyspira hyodysenteriae (strain ATCC 49526 / WA1).